A 210-amino-acid polypeptide reads, in one-letter code: MKIVWYGHACFLIKTKGVSILIDPYPDVDEDRMEKVDYILITHEHMDHYGKTPLIAKLNDAEVIGPKTVYLMAISDGLTKVREIEAGQEIQLGDVTVKAFYTEHPTSQYPLGYLIIGDKRVAHLGDTYYSPSFKNLRGQVDILLVPIGGRSTASEREAVDIVDIIRPRIAVPMHYGTYGGGSAEGFKRELQRRRVWVLVKDLKPYEGFEV.

This sequence belongs to the UPF0173 family.

This chain is UPF0173 protein PYRAB01190, found in Pyrococcus abyssi (strain GE5 / Orsay).